The sequence spans 191 residues: MSETFNQIKESFIEYLLFQYRFKSRIAVWVLNYIKVNEAKLANIHFVDTKINHHETLEIAEVGSHASAIQFTKRNIKLMNTNEIFDYIANHNCAFDIQIHFANVSKREQRLDDLIVAQLTESPSYQTYLHDLNSMAIDRHKHALLIDYLLHNIDLSLQMNEKQRFYQLTQILNTLKLVNKHNQFEDLADDN.

The protein belongs to the UPF0302 family.

In Staphylococcus aureus (strain USA300 / TCH1516), this protein is UPF0302 protein USA300HOU_1400.